A 256-amino-acid chain; its full sequence is Transcription factor CAULIFLOWER (256 aa).

The 61-residue stretch at 1–61 folds into the MADS-box domain; that stretch reads MGRGRVQLKR…GKLFEYTSES (61 aa). In terms of domain architecture, K-box spans 90–180; sequence QPNWSMEYSR…TKQIKERENI (91 aa).

Homodimer capable of binding to CArG-box sequences.

The protein localises to the nucleus. Probable transcription factor that promotes early floral meristem identity in synergy with APETALA1, FRUITFULL and LEAFY. Is required subsequently for the transition of an inflorescence meristem into a floral meristem. Seems to be partially redundant to the function of APETALA1. In Arabidopsis lyrata subsp. lyrata (Lyre-leaved rock-cress), this protein is Transcription factor CAULIFLOWER (CAL).